A 218-amino-acid polypeptide reads, in one-letter code: Peptide methionine sulfoxide reductase MsrA (218 aa).

Cys57 is an active-site residue.

This sequence belongs to the MsrA Met sulfoxide reductase family.

The catalysed reaction is L-methionyl-[protein] + [thioredoxin]-disulfide + H2O = L-methionyl-(S)-S-oxide-[protein] + [thioredoxin]-dithiol. It catalyses the reaction [thioredoxin]-disulfide + L-methionine + H2O = L-methionine (S)-S-oxide + [thioredoxin]-dithiol. Has an important function as a repair enzyme for proteins that have been inactivated by oxidation. Catalyzes the reversible oxidation-reduction of methionine sulfoxide in proteins to methionine. The sequence is that of Peptide methionine sulfoxide reductase MsrA from Brucella melitensis biotype 1 (strain ATCC 23456 / CCUG 17765 / NCTC 10094 / 16M).